Consider the following 710-residue polypeptide: Zinc finger and BTB domain-containing protein 24 (710 aa).

One can recognise a BTB domain in the interval 37 to 103 (CDITLIVENV…IYTGYLHASE (67 aa)). 2 disordered regions span residues 134 to 176 (APKP…EGRS) and 202 to 256 (EEDS…SRRR). The segment at residues 159-171 (KRKRGRPRKANGL) is a DNA-binding region (a.T hook). Basic and acidic residues-rich tracts occupy residues 202-219 (EEDSVKLSEQTPEDKESE) and 231-244 (PAEKDENFDPKAGD). C2H2-type zinc fingers lie at residues 293–315 (ARCKDCDRVFKYSHFLAIHQRRH), 321–343 (FKCNECGKGFAQKHSLQVHTRMH), 349–371 (YTCTVCGKALTTKHSLLEHMSLH), 377–399 (FTCDQCGKYFSQKRQLKSHYRVH), 405–427 (PECSHCHRKFMDVSQLKKHLRTH), 433–455 (FTCEICGKSFTAKSSLQTHIRIH), 461–483 (YSCSICGKCFSDSSAKRRHCILH), and 489–511 (FSCPECGLQFARLDNLKAHLKIH). The tract at residues 651–676 (EQTTSSVPAADTGARATPVPSTRPGA) is disordered.

It belongs to the krueppel C2H2-type zinc-finger protein family. Interacts with MN1. As to expression, widely expressed. Highest level in liver, testis and kidney.

Its subcellular location is the nucleus. Functionally, may be involved in BMP2-induced transcription. This Mus musculus (Mouse) protein is Zinc finger and BTB domain-containing protein 24 (Zbtb24).